Here is a 591-residue protein sequence, read N- to C-terminus: ATP-dependent lipid A-core flippase (591 aa).

The next 5 membrane-spanning stretches (helical) occupy residues 34–54, 71–91, 158–178, 258–278, and 285–305; these read LILAVLLMAGAAATQPTLAVI, IWSVPLAVIGLILLRGVCNFF, LVVISLIAVLLYMSWLLTVII, LTPLTQVCIAVAVGAVIAVAL, and TLTAGAFAAFMSALAQIFDPI. In terms of domain architecture, ABC transmembrane type-1 spans 35–317; it reads ILAVLLMAGA…LTNLASKMQK (283 aa). Residues 350-586 form the ABC transporter domain; that stretch reads IEFRQIGHRF…GGLYATLYNM (237 aa). 384–391 contributes to the ATP binding site; the sequence is GRSGSGKT.

The protein belongs to the ABC transporter superfamily. Lipid exporter (TC 3.A.1.106) family. As to quaternary structure, homodimer.

The protein resides in the cell inner membrane. The enzyme catalyses ATP + H2O + lipid A-core oligosaccharideSide 1 = ADP + phosphate + lipid A-core oligosaccharideSide 2.. Its function is as follows. Involved in lipopolysaccharide (LPS) biosynthesis. Translocates lipid A-core from the inner to the outer leaflet of the inner membrane. Transmembrane domains (TMD) form a pore in the inner membrane and the ATP-binding domain (NBD) is responsible for energy generation. The polypeptide is ATP-dependent lipid A-core flippase (Bordetella avium (strain 197N)).